Here is a 597-residue protein sequence, read N- to C-terminus: Indole-3-acetic acid-amido synthetase GH3.4 (597 aa).

It belongs to the IAA-amido conjugating enzyme family.

Catalyzes the synthesis of indole-3-acetic acid (IAA)-amino acid conjugates, providing a mechanism for the plant to cope with the presence of excess auxin. Strongly reactive with Glu, Gln, Trp, Asp, Ala, Leu, Phe, Gly, Tyr, Met, Ile and Val. Little or no product formation with His, Ser, Thr, Arg, Lys, or Cys. Also active on pyruvic and butyric acid analogs of IAA, PAA and the synthetic auxin naphthaleneacetic acid (NAA). The two chlorinated synthetic auxin herbicides 2,4-D and 3,6-dichloro-o-anisic acid (dicamba) cannot be used as substrates. The protein is Indole-3-acetic acid-amido synthetase GH3.4 (GH3.4) of Arabidopsis thaliana (Mouse-ear cress).